The chain runs to 806 residues: Acetyl-CoA decarbonylase/synthase complex subunit alpha 1 (806 aa).

Residues Cys-73, Cys-76, Cys-77, Cys-79, Cys-84, and Cys-94 each contribute to the [4Fe-4S] cluster site. His-117 lines the CO pocket. Residues His-250, Cys-278, and Cys-323 each coordinate [Ni-4Fe-4S] cluster. 2 consecutive 4Fe-4S ferredoxin-type domains span residues 407 to 436 (DEQMKEWVDKCADCGSCYLVCPEELEIPEA) and 445 to 475 (YSYLVDLHDQCIGCRRCEQVCKKEIPILSVI). [4Fe-4S] cluster-binding residues include Cys-417, Cys-420, Cys-423, Cys-427, Cys-455, Cys-458, Cys-461, and Cys-465. [Ni-4Fe-4S] cluster-binding residues include Cys-523, Cys-552, and Cys-587.

It belongs to the Ni-containing carbon monoxide dehydrogenase family. As to quaternary structure, heterotetramer of two alpha and two epsilon subunits. The ACDS complex is made up of alpha, epsilon, beta, gamma and delta subunits with a probable stoichiometry of (alpha(2)epsilon(2))(4)-beta(8)-(gamma(1)delta(1))(8). Requires [4Fe-4S] cluster as cofactor. It depends on [Ni-4Fe-4S] cluster as a cofactor.

The catalysed reaction is CO + 2 oxidized [2Fe-2S]-[ferredoxin] + H2O = 2 reduced [2Fe-2S]-[ferredoxin] + CO2 + 2 H(+). The protein operates within one-carbon metabolism; methanogenesis from acetate. In terms of biological role, part of the ACDS complex that catalyzes the reversible cleavage of acetyl-CoA, allowing growth on acetate as sole source of carbon and energy. The alpha-epsilon subcomponent functions as a carbon monoxide dehydrogenase. This Methanosarcina thermophila protein is Acetyl-CoA decarbonylase/synthase complex subunit alpha 1.